A 1409-amino-acid polypeptide reads, in one-letter code: L-2-aminoadipate reductase large subunit (1409 aa).

One can recognise a Carrier domain in the interval 858–937 (QALSETEQTL…GFASEIDRLL (80 aa)). Serine 896 is subject to O-(pantetheine 4'-phosphoryl)serine.

The protein belongs to the ATP-dependent AMP-binding enzyme family. Heterodimer of an alpha and a beta subunit. Pantetheine 4'-phosphate is required as a cofactor.

The catalysed reaction is (S)-2-amino-6-oxohexanoate + NADP(+) + H2O = L-2-aminoadipate + NADPH + 2 H(+). It catalyses the reaction (S)-2-amino-6-oxohexanoate + NAD(+) + H2O = L-2-aminoadipate + NADH + 2 H(+). The enzyme catalyses (S)-2-amino-6-oxohexanoate + AMP + diphosphate + NADP(+) = L-2-aminoadipate + ATP + NADPH + H(+). Its pathway is amino-acid biosynthesis; L-lysine biosynthesis via AAA pathway; L-lysine from L-alpha-aminoadipate (fungal route): step 1/3. Its function is as follows. Catalyzes the activation of alpha-aminoadipate by ATP-dependent adenylation and the reduction of activated alpha-aminoadipate by NADPH. The activated alpha-aminoadipate is bound to the phosphopantheinyl group of the enzyme itself before it is reduced to (S)-2-amino-6-oxohexanoate. This Penicillium chrysogenum (Penicillium notatum) protein is L-2-aminoadipate reductase large subunit (lys2).